A 360-amino-acid polypeptide reads, in one-letter code: Phenylalanine--tRNA ligase alpha subunit (360 aa).

Position 260 (glutamate 260) interacts with Mg(2+).

The protein belongs to the class-II aminoacyl-tRNA synthetase family. Phe-tRNA synthetase alpha subunit type 1 subfamily. As to quaternary structure, tetramer of two alpha and two beta subunits. Requires Mg(2+) as cofactor.

It is found in the cytoplasm. The catalysed reaction is tRNA(Phe) + L-phenylalanine + ATP = L-phenylalanyl-tRNA(Phe) + AMP + diphosphate + H(+). The chain is Phenylalanine--tRNA ligase alpha subunit from Sinorhizobium fredii (strain NBRC 101917 / NGR234).